The following is a 156-amino-acid chain: 6,7-dimethyl-8-ribityllumazine synthase (156 aa).

Residues F23, 57–59 (AFE), and 81–83 (AVI) contribute to the 5-amino-6-(D-ribitylamino)uracil site. Residue 86 to 87 (ST) coordinates (2S)-2-hydroxy-3-oxobutyl phosphate. H89 (proton donor) is an active-site residue. F114 contacts 5-amino-6-(D-ribitylamino)uracil. A (2S)-2-hydroxy-3-oxobutyl phosphate-binding site is contributed by R128.

It belongs to the DMRL synthase family.

It catalyses the reaction (2S)-2-hydroxy-3-oxobutyl phosphate + 5-amino-6-(D-ribitylamino)uracil = 6,7-dimethyl-8-(1-D-ribityl)lumazine + phosphate + 2 H2O + H(+). It participates in cofactor biosynthesis; riboflavin biosynthesis; riboflavin from 2-hydroxy-3-oxobutyl phosphate and 5-amino-6-(D-ribitylamino)uracil: step 1/2. Its function is as follows. Catalyzes the formation of 6,7-dimethyl-8-ribityllumazine by condensation of 5-amino-6-(D-ribitylamino)uracil with 3,4-dihydroxy-2-butanone 4-phosphate. This is the penultimate step in the biosynthesis of riboflavin. This is 6,7-dimethyl-8-ribityllumazine synthase from Campylobacter lari (strain RM2100 / D67 / ATCC BAA-1060).